The following is a 1893-amino-acid chain: MEGCVGEESFQMWELNRRLEAYLTRVKTLEEQNQLLSAELGGLRAQSGDTSWRARADDELASLRILVDQRWREKLEAEVQRDNLAEELESVAGRCQQVRLARERTVQEAACSRRALEAEKNARGWLSTQAAELERELEALRAAHEEERAHLNAQAACAPRRPPAPPHGSPVRAPEVEDLARRLGEVWRGAVRDYQERVAHMESSLGQARERLSQAVRGARECRLEVQQLQADRDSLQERREALEQRLEGRWQDRLQATDKFQLAVEALEQEKQGLQSQIAQILEGGQQLAHLKMSLSLEVATYRTLLEAENSRLQTPGRGSQASLGFLDPKLKPNFLGIPEDQYLGSVLPALSPTSFPSPLPNTLETPVTAFLKTQEFLQARTPTLASTPIPPISEAPCPPNAEVRAQEVPLSLLQTQAPEPLWAEATVPSSSAILPELEEPGGKQQGHFPDDLTSLATTLNPHHPTLEAKDGESSGSRVSSIFQEDEGQIWELVEKEADIEVKVENSSAQKTQESGLDTEETQDSQGPLQKETLKALGEEPLMSLKIQNYETAGKENCNSSTEGHLGTLEGPEKEKQIPLKSLEEKNVESEKTLENGVPVLSELLGKEDTRTEDQELMSPKGTLKRFSSLGKESQEVVRPSKEGNLESWTAFKEESQHPLGFPGAEDQMLERLVEKEDQSFPRSPEEEDQEACRPLQKENQEPLGYEEAEGQILERLIEKESQESLRSPEEEDQEAGRSLQKGNQEPLGYEEAEGQILERLIEKESQESLRSAEEEDQEACRSLQKENQEPLGYEEAEDQILERLIEKESQESLRSPEEEDQEAGRSLQKENQEPLGYEEAEDQMLERLIEKESQESLKSPEENQRIGKPLERENQKSLRYLEENQETFVPLESRNQRPLRSLEVEEEEQRIVKPLEKVSQDSLGSLAEENVQPLRYLEEDNCINKSLLEDKTHKSLGSLEDRNGDSIIIPQESETQVSLRPPEEEDQRIVNHLEKESQEFSRSSEEEERVMERSLEGENHESLSSVEKEDQMVESQLEKESQDSGKSLEDESQETFGPLEKENAESLRSLAGQDQEEQKLEQETQQTLRAVGNEQMAVSPPEKVDPELPKPLGNDQEIARSLGKENQESLVSLKEKGIETVKSLETEIIEPLETAEEDLERRKSIDTQEPLWSTEVARETVEPPEDEPPGSLGSVDENRETLTSLEKESQELSSLGKWNVETRVEDSQQCLQVEEGLQEEQHQESLREVKQELPSSGNQQRWEDVVEGKAVGQEAPLATTGVGTEDKAELHLRGQGGEEEAAAEGELLQDIVGEAWSLGSSEPKEQRVPAEALDNLEGGALEVPVAQSMPEVTERDEDRAQAGEQDSIEVTLGLEAARTGLELEQEVVGLEDPRHFAREEAIPPSLGEESVKAKIAQGLEGPGKEPKEAGALDSGILELPKTSSEALECQGHEESESMEGWEEEEASLETSDHEGSDAPQPRPPETEEDEGAQAALTAPGPKLLEPCSPIPILTDAHELQPQAEGIQEAGWQPEAGSEALERVENEPEFGLGEIPEGLQDWEEGREESEADDLGETLPDSTPLGLYLRSPASPKWDLAGEQRLSPQGDAGKEDWGPAVPAAQGLSGPPEEEEEQGHGSDLSSEEFEDLGTEASLLPGVPKEVADHVGQVPPVLQPACWDQGGESDGFADEEESGEEGEEEDADEEGAESGAQWWGSGASGGGCKVQDIAQRGDPVQESVGVSGLWDDGLRGAAANVPALEMVSQDSAEPSGSEESESASLEGEEGQVTDHLDAPQEVTSMVPGVGDAFDIGGQSPNLDSEQVNGKMENGLEQAEGQVVLDGDEDQELLLQGQEVGALKVPLVASPVHLGPSQPLKFTLSGVDGDSWSSGED.

Position 1 is an N-acetylmethionine (M1). Positions 1 to 7 are head; that stretch reads MEGCVGE. A coil 1A region spans residues 8-43; that stretch reads ESFQMWELNRRLEAYLTRVKTLEEQNQLLSAELGGL. In terms of domain architecture, IF rod spans 8–314; that stretch reads ESFQMWELNR…TLLEAENSRL (307 aa). The interval 44–55 is linker 1; the sequence is RAQSGDTSWRAR. A coil 1B region spans residues 56-151; it reads ADDELASLRI…AAHEEERAHL (96 aa). Positions 150–172 are disordered; the sequence is HLNAQAACAPRRPPAPPHGSPVR. A linker 12 region spans residues 152-174; it reads NAQAACAPRRPPAPPHGSPVRAP. The segment at 175 to 193 is coil 2A; the sequence is EVEDLARRLGEVWRGAVRD. A linker 2 region spans residues 194-196; it reads YQE. Residues 197–314 form a coil 2B region; the sequence is RVAHMESSLG…TLLEAENSRL (118 aa). A Phosphoserine modification is found at S312. A tail region spans residues 315–1893; sequence QTPGRGSQAS…DGDSWSSGED (1579 aa). Phosphothreonine is present on T316. Phosphoserine is present on residues S356 and S359. T389 is subject to Phosphothreonine. 3 disordered regions span residues 437-479, 507-529, and 556-879; these read PELE…SGSR, NSSA…SQGP, and KENC…NQKS. Residues 507-517 are compositionally biased toward polar residues; sequence NSSAQKTQESG. S562 bears the Phosphoserine mark. 2 stretches are compositionally biased toward basic and acidic residues: residues 572-595 and 606-615; these read GPEK…EKTL and LGKEDTRTED. S620 carries the post-translational modification Phosphoserine. 2 stretches are compositionally biased toward basic and acidic residues: residues 634–646 and 670–681; these read ESQE…KEGN and MLERLVEKEDQS. Phosphoserine is present on residues S685 and S729. Basic and acidic residues-rich tracts occupy residues 717–730, 761–774, 802–818, and 846–879; these read RLIE…LRSP, RLIE…LRSA, ILER…LRSP, and MLER…NQKS. Phosphoserine is present on S817. S903 bears the Phosphoserine mark. Composition is skewed to basic and acidic residues over residues 949–966 and 989–1051; these read LLED…DRNG and QRIV…KSLE. A disordered region spans residues 949 to 1130; the sequence is LLEDKTHKSL…ARSLGKENQE (182 aa). Phosphoserine is present on residues S1005 and S1049. K1136 participates in a covalent cross-link: Glycyl lysine isopeptide (Lys-Gly) (interchain with G-Cter in SUMO1); alternate. K1136 is covalently cross-linked (Glycyl lysine isopeptide (Lys-Gly) (interchain with G-Cter in SUMO2); alternate). A phosphoserine mark is found at S1145 and S1166. Positions 1155 to 1222 are disordered; sequence ETAEEDLERR…ELSSLGKWNV (68 aa). The segment covering 1198 to 1212 has biased composition (basic and acidic residues); that stretch reads DENRETLTSLEKESQ. Phosphoserine is present on residues S1216 and S1229. The disordered stretch occupies residues 1237 to 1263; sequence EGLQEEQHQESLREVKQELPSSGNQQR. The span at 1241 to 1253 shows a compositional bias: basic and acidic residues; that stretch reads EEQHQESLREVKQ. S1322 bears the Phosphoserine mark. Disordered stretches follow at residues 1336–1369 and 1388–1824; these read DNLE…EQDS and EVVG…SEQV. Basic and acidic residues-rich tracts occupy residues 1354–1363 and 1393–1403; these read VTERDEDRAQ and EDPRHFAREEA. Composition is skewed to acidic residues over residues 1458-1469 and 1561-1576; these read ESMEGWEEEEAS and QDWE…DDLG. 6 positions are modified to phosphoserine: S1570, S1594, S1686, S1695, S1772, and S1774. A compositionally biased stretch (acidic residues) spans 1688–1709; that stretch reads GFADEEESGEEGEEEDADEEGA. Residues 1773–1788 are compositionally biased toward acidic residues; the sequence is GSEESESASLEGEEGQ. Over residues 1815-1824 the composition is skewed to polar residues; it reads QSPNLDSEQV. Phosphoserine occurs at positions 1866, 1889, and 1890. The tract at residues 1870–1893 is disordered; sequence LGPSQPLKFTLSGVDGDSWSSGED.

The protein belongs to the intermediate filament family. As to quaternary structure, forms homodimers and homotetramers in vitro. In mixtures with other intermediate filament proteins such as vimentin and alpha-internexin, this protein preferentially forms heterodimers which can assemble to form intermediate filaments if nestin does not exceed 25%. Interacts with FHOD3. Constitutively phosphorylated. This increases during mitosis when the cytoplasmic intermediate filament network is reorganized. CNS stem cells.

Its function is as follows. Required for brain and eye development. Promotes the disassembly of phosphorylated vimentin intermediate filaments (IF) during mitosis and may play a role in the trafficking and distribution of IF proteins and other cellular factors to daughter cells during progenitor cell division. Required for survival, renewal and mitogen-stimulated proliferation of neural progenitor cells. This chain is Nestin (Nes), found in Rattus norvegicus (Rat).